Reading from the N-terminus, the 164-residue chain is Protein phosphatase 1 regulatory subunit 14C (164 aa).

Positions 1 to 19 are enriched in gly residues; that stretch reads MSVVTGGGEAAGGGGGGGA. A disordered region spans residues 1–70; it reads MSVVTGGGEA…QQQRRHQQGK (70 aa). Residue Ser2 is modified to N-acetylserine. A Phosphoserine modification is found at Ser25. Arg27 is modified (omega-N-methylarginine). Phosphoserine is present on Ser33. A compositionally biased stretch (low complexity) spans 50-62; sequence VTTVAAAGQVQQQ. Phosphothreonine; by ILK1 is present on Thr72.

It belongs to the PP1 inhibitor family. Post-translationally, the main inhibitory site appears to be Thr-72. Has over 600-fold higher inhibitory activity when phosphorylated, creating a molecular switch for regulating the phosphorylation status of PPP1CA substrates and smooth muscle contraction. In terms of tissue distribution, detected in heart, muscle, spinal cord, hippocampus, hypothalamus, thalamus, midbrain, brain stem, cerebellum, brain cortex and olfactory bulb.

Its subcellular location is the endomembrane system. Functionally, inhibitor of the PP1 regulatory subunit PPP1CA. This chain is Protein phosphatase 1 regulatory subunit 14C (Ppp1r14c), found in Mus musculus (Mouse).